Consider the following 240-residue polypeptide: Dephospho-CoA kinase domain-containing protein (240 aa).

One can recognise a DPCK domain in the interval 3-207; sequence LVGLTGGIAS…RSMEYLPLRL (205 aa). 8–15 is a binding site for ATP; the sequence is GGIASGKS.

This sequence belongs to the CoaE family.

The chain is Dephospho-CoA kinase domain-containing protein (Dcakd) from Rattus norvegicus (Rat).